The chain runs to 160 residues: Lipoprotein signal peptidase (160 aa).

The next 4 membrane-spanning stretches (helical) occupy residues 7–27 (WFWLVAIIGLGLDQLTKYITV), 39–59 (LWPGVFHLTYVINTGAAFSFF), 62–82 (GAVWLRWLSLAVSLGLIFLGW), and 96–116 (GFILAGALGNGIDRFLFGYVV). Residues Asp-117 and Asp-133 contribute to the active site. A helical transmembrane segment spans residues 126–146 (FPVFNLADTFINIGIFFLLLA).

It belongs to the peptidase A8 family.

It localises to the cell inner membrane. The catalysed reaction is Release of signal peptides from bacterial membrane prolipoproteins. Hydrolyzes -Xaa-Yaa-Zaa-|-(S,diacylglyceryl)Cys-, in which Xaa is hydrophobic (preferably Leu), and Yaa (Ala or Ser) and Zaa (Gly or Ala) have small, neutral side chains.. Its pathway is protein modification; lipoprotein biosynthesis (signal peptide cleavage). Functionally, this protein specifically catalyzes the removal of signal peptides from prolipoproteins. This chain is Lipoprotein signal peptidase, found in Gloeothece citriformis (strain PCC 7424) (Cyanothece sp. (strain PCC 7424)).